The following is a 174-amino-acid chain: Peptidyl-prolyl cis-trans isomerase-like 1 (174 aa).

A PPIase cyclophilin-type domain is found at 5 to 159 (SPTYVTFDTS…EEIKIHRARL (155 aa)).

Belongs to the cyclophilin-type PPIase family. PPIL1 subfamily.

It carries out the reaction [protein]-peptidylproline (omega=180) = [protein]-peptidylproline (omega=0). Its function is as follows. PPIases accelerate the folding of proteins. It catalyzes the cis-trans isomerization of proline imidic peptide bonds in oligopeptides. The sequence is that of Peptidyl-prolyl cis-trans isomerase-like 1 (CYP1) from Cryptococcus neoformans var. neoformans serotype D (strain B-3501A) (Filobasidiella neoformans).